A 122-amino-acid polypeptide reads, in one-letter code: Small ribosomal subunit protein uS12 (122 aa).

A disordered region spans residues 1–45 (MPTTNQLVRKERKRQTKKTATPALQGSPQRRGVCTRVSTTTPKKP). Residues 18-28 (KTATPALQGSP) show a composition bias toward polar residues. Residue Asp89 is modified to 3-methylthioaspartic acid.

This sequence belongs to the universal ribosomal protein uS12 family. Part of the 30S ribosomal subunit. Contacts proteins S8 and S17. May interact with IF1 in the 30S initiation complex.

Functionally, with S4 and S5 plays an important role in translational accuracy. Interacts with and stabilizes bases of the 16S rRNA that are involved in tRNA selection in the A site and with the mRNA backbone. Located at the interface of the 30S and 50S subunits, it traverses the body of the 30S subunit contacting proteins on the other side and probably holding the rRNA structure together. The combined cluster of proteins S8, S12 and S17 appears to hold together the shoulder and platform of the 30S subunit. This is Small ribosomal subunit protein uS12 from Rubrobacter xylanophilus (strain DSM 9941 / JCM 11954 / NBRC 16129 / PRD-1).